The following is a 358-amino-acid chain: Uroporphyrinogen decarboxylase (358 aa).

Residues 36-40 (RQAGR), Asp85, Tyr160, Ser215, and His338 each bind substrate.

It belongs to the uroporphyrinogen decarboxylase family. In terms of assembly, homodimer.

It is found in the cytoplasm. The catalysed reaction is uroporphyrinogen III + 4 H(+) = coproporphyrinogen III + 4 CO2. It participates in porphyrin-containing compound metabolism; protoporphyrin-IX biosynthesis; coproporphyrinogen-III from 5-aminolevulinate: step 4/4. In terms of biological role, catalyzes the decarboxylation of four acetate groups of uroporphyrinogen-III to yield coproporphyrinogen-III. This chain is Uroporphyrinogen decarboxylase, found in Corynebacterium glutamicum (strain ATCC 13032 / DSM 20300 / JCM 1318 / BCRC 11384 / CCUG 27702 / LMG 3730 / NBRC 12168 / NCIMB 10025 / NRRL B-2784 / 534).